The following is a 153-amino-acid chain: Salivary C-type lectin 1 (153 aa).

Residues 1 to 19 form the signal peptide; that stretch reads MIFSLYLIVAISLADLTAA. The 126-residue stretch at 26–151 folds into the C-type lectin domain; it reads KNRFCFPNVV…CSSTRRFVCE (126 aa). 2 disulfide bridges follow: Cys-45/Cys-150 and Cys-122/Cys-142.

It depends on Ca(2+) as a cofactor. In terms of tissue distribution, expressed in female salivary gland. Not detected or low-level expression in female midgut and fat body.

Its subcellular location is the secreted. Its function is as follows. Salivary protein with carbohydrate-binding activity; exibits high affinity for D-mannose. Agglutinates host erythrocytes. Probably participates in mosquito innate immune responses to prevent microorganism multiplication in sugar and blood meals. Functionally, (Microbial infection) Agglutinates Staphylococcus aureus in vitro. In terms of biological role, (Microbial infection) Agglutinates Candida albicans in vitro. (Microbial infection) Does not agglutinate Escherichia coli in vitro. This Aedes albopictus (Asian tiger mosquito) protein is Salivary C-type lectin 1.